The chain runs to 526 residues: Thioredoxin reductase 2, mitochondrial (526 aa).

A mitochondrion-targeting transit peptide spans 1-36 (MAAIVAALRGSSGRFRPQTRVLTRGTRGAAGAASAA). 43–72 (DLLVIGGGSGGLACAKEAAQLGRKVAVADY) serves as a coordination point for FAD. The residue at position 81 (K81) is an N6-succinyllysine. An intrachain disulfide couples C88 to C93. N6-succinyllysine occurs at positions 177 and 331. H499 functions as the Proton acceptor in the catalytic mechanism. Positions 524–525 (CU) form a cross-link, cysteinyl-selenocysteine (Cys-Sec). Residue U525 is a non-standard amino acid, selenocysteine.

It belongs to the class-I pyridine nucleotide-disulfide oxidoreductase family. As to quaternary structure, homodimer. FAD is required as a cofactor. Expressed in liver, kidney, adrenal gland and heart.

The protein resides in the mitochondrion. The enzyme catalyses [thioredoxin]-dithiol + NADP(+) = [thioredoxin]-disulfide + NADPH + H(+). Functionally, involved in the control of reactive oxygen species levels and the regulation of mitochondrial redox homeostasis. Maintains mitochondrial thioredoxin in a reduced state. May play a role in redox-regulated cell signaling. This is Thioredoxin reductase 2, mitochondrial (Txnrd2) from Rattus norvegicus (Rat).